The following is a 65-amino-acid chain: Peptide ToAcP (65 aa).

An N-terminal signal peptide occupies residues 1–24; it reads MKMKMIVVISILLIVFSLSSKAMS. Positions 25–34 are excised as a propeptide; sequence LEDEQESVQR. Alanine 58 is subject to Alanine amide. Residues 59–65 constitute a propeptide that is removed on maturation; sequence GRFDPAV.

In terms of tissue distribution, expressed by the venom gland.

Its subcellular location is the secreted. Functionally, helical wheel projections predict no hydrophobic face, suggesting a non-amphipathic peptide. Does not show antifungal activity. In Tityus obscurus (Amazonian scorpion), this protein is Peptide ToAcP.